Here is a 664-residue protein sequence, read N- to C-terminus: tRNA (carboxymethyluridine(34)-5-O)-methyltransferase ALKBH8 (664 aa).

The RRM domain occupies 43–120 (QSLVVANGGL…QKIILYLNFV (78 aa)). A Fe2OG dioxygenase domain is found at 220-337 (KPDQMTINQY…RTSFTFRKVR (118 aa)). 227-229 (NQY) is a binding site for 2-oxoglutarate. Positions 238 and 240 each coordinate Fe cation. Residue His242 coordinates Zn(2+). His292 contributes to the Fe cation binding site. 2 residues coordinate 2-oxoglutarate: Arg328 and Arg334. Zn(2+) contacts are provided by Cys341, Cys343, and Cys349. Positions 411–664 (ADIGCGNGKY…GNWCVILQKA (254 aa)) are methyltransferase domain. The disordered stretch occupies residues 516 to 575 (KYLKGNRNSQGKKEEMNSDTSVQRSLVEQMPDMGSRDSASSVPRINDSQEGGCNSRQVSN). A compositionally biased stretch (polar residues) spans 552–575 (DSASSVPRINDSQEGGCNSRQVSN).

The protein belongs to the alkB family. Interacts with TRMT112. Fe(2+) serves as cofactor.

Its subcellular location is the cytoplasm. The protein localises to the nucleus. The enzyme catalyses 5-(carboxymethyl)uridine(34) in tRNA + S-adenosyl-L-methionine = 5-(2-methoxy-2-oxoethyl)uridine(34) in tRNA + S-adenosyl-L-homocysteine. Catalyzes the methylation of 5-carboxymethyl uridine to 5-methylcarboxymethyl uridine at the wobble position of the anticodon loop in tRNA via its methyltransferase domain. Catalyzes the last step in the formation of 5-methylcarboxymethyl uridine at the wobble position of the anticodon loop in target tRNA. Has a preference for tRNA(Arg) and tRNA(Glu), and does not bind tRNA(Lys). Binds tRNA and catalyzes the iron and alpha-ketoglutarate dependent hydroxylation of 5-methylcarboxymethyl uridine at the wobble position of the anticodon loop in tRNA via its dioxygenase domain, giving rise to 5-(S)-methoxycarbonylhydroxymethyluridine; has a preference for tRNA(Gly). Required for normal survival after DNA damage. May inhibit apoptosis and promote cell survival and angiogenesis. This Macaca fascicularis (Crab-eating macaque) protein is tRNA (carboxymethyluridine(34)-5-O)-methyltransferase ALKBH8 (ALKBH8).